The sequence spans 1315 residues: ESX secretion system protein EccC (1315 aa).

Over residues 1–11 (MSTVLVRRKER) the composition is skewed to basic residues. A disordered region spans residues 1-21 (MSTVLVRRKERRQPPQMPRGE). The Cytoplasmic portion of the chain corresponds to 1 to 40 (MSTVLVRRKERRQPPQMPRGEILLESPPELPEVVTNSFQN). A helical transmembrane segment spans residues 41-61 (VLMYLPMAAGSAAMVFTFLNH). The Extracellular segment spans residues 62 to 64 (RNT). The helical transmembrane segment at 65-85 (LQLVAGGMFALSMFGMMFGQL) threads the bilayer. Over 86-1315 (SQQSGERKTK…RLIQTAYRES (1230 aa)) the chain is Cytoplasmic. FtsK domains lie at 456 to 656 (GRPL…MESR) and 813 to 1004 (RDPY…YESE). 479–486 (GATGSGKS) contacts ATP. Glu593 is a catalytic residue. Residues 721-1315 (RPQVVEQPQP…RLIQTAYRES (595 aa)) form a binds EsxB region. ATP-binding positions include 834–839 (QTGKST), Thr1031, 1119–1124 (ECGKSN), Gln1293, and 1310–1311 (TA). One can recognise a FtsK 3 domain in the interval 1099–1282 (LSPVYLDFNT…MSGNKDEGIL (184 aa)).

In terms of assembly, the cytosolic domain can form homodimers. Binds EsxB, which leads to multimerization, however EsxA disassembles the multimers, possibly by making EccC-EsxA-EsxB trimers instead of EccC-EsxB-EsxB-EccC tetramers. Forms a complex with EsxA and EsxB, probably wholly mediated by EsxB.

The protein localises to the cell membrane. EsxB binding to the third FtsK domain causes multimerization; a subsequent unknown step relieves the allosteric inhibition of linker 2 on FtsK domain 1, activating the ATPase activity; a mutant EsxB ('Ala-98') does not cause multimers to form. Functionally, part of the ESX specialized secretion system, which exports proteins from the cell including EsxA (ESAT-6) and EsxB (CFP-10). Has weak intrinsic ATPase activity; probably only the first FtsK domain can hydrolyze ATP. Might be the translocase subunit. The polypeptide is ESX secretion system protein EccC (Thermomonospora curvata (strain ATCC 19995 / DSM 43183 / JCM 3096 / KCTC 9072 / NBRC 15933 / NCIMB 10081 / Henssen B9)).